We begin with the raw amino-acid sequence, 556 residues long: Formate--tetrahydrofolate ligase (556 aa).

Position 65–72 (65–72 (TPAGEGKT)) interacts with ATP.

The protein belongs to the formate--tetrahydrofolate ligase family.

The enzyme catalyses (6S)-5,6,7,8-tetrahydrofolate + formate + ATP = (6R)-10-formyltetrahydrofolate + ADP + phosphate. Its pathway is one-carbon metabolism; tetrahydrofolate interconversion. This is Formate--tetrahydrofolate ligase from Lachnoclostridium phytofermentans (strain ATCC 700394 / DSM 18823 / ISDg) (Clostridium phytofermentans).